A 207-amino-acid chain; its full sequence is Small ribosomal subunit protein uS4 (207 aa).

Positions 33-54 (KLDSKPGQHGRTSGARTSDYGN) are disordered. A compositionally biased stretch (polar residues) spans 42 to 53 (GRTSGARTSDYG). Residues 97–157 (SRLDNVVYRM…EKSKKQVRIA (61 aa)) enclose the S4 RNA-binding domain.

Belongs to the universal ribosomal protein uS4 family. In terms of assembly, part of the 30S ribosomal subunit. Contacts protein S5. The interaction surface between S4 and S5 is involved in control of translational fidelity.

One of the primary rRNA binding proteins, it binds directly to 16S rRNA where it nucleates assembly of the body of the 30S subunit. Its function is as follows. With S5 and S12 plays an important role in translational accuracy. The chain is Small ribosomal subunit protein uS4 from Ralstonia pickettii (strain 12J).